The chain runs to 1378 residues: DNA-directed RNA polymerase subunit beta (1378 aa).

Belongs to the RNA polymerase beta chain family. As to quaternary structure, the RNAP catalytic core consists of 2 alpha, 1 beta, 1 beta' and 1 omega subunit. When a sigma factor is associated with the core the holoenzyme is formed, which can initiate transcription.

The catalysed reaction is RNA(n) + a ribonucleoside 5'-triphosphate = RNA(n+1) + diphosphate. In terms of biological role, DNA-dependent RNA polymerase catalyzes the transcription of DNA into RNA using the four ribonucleoside triphosphates as substrates. This chain is DNA-directed RNA polymerase subunit beta, found in Hyphomonas neptunium (strain ATCC 15444).